A 402-amino-acid polypeptide reads, in one-letter code: Pyridinium-3,5-bisthiocarboxylic acid mononucleotide nickel insertion protein (402 aa).

This sequence belongs to the LarC family.

It catalyses the reaction Ni(II)-pyridinium-3,5-bisthiocarboxylate mononucleotide = pyridinium-3,5-bisthiocarboxylate mononucleotide + Ni(2+). Its function is as follows. Involved in the biosynthesis of a nickel-pincer cofactor ((SCS)Ni(II) pincer complex). Binds Ni(2+), and functions in nickel delivery to pyridinium-3,5-bisthiocarboxylic acid mononucleotide (P2TMN), to form the mature cofactor. Is thus probably required for the activation of nickel-pincer cofactor-dependent enzymes. This is Pyridinium-3,5-bisthiocarboxylic acid mononucleotide nickel insertion protein from Thermotoga sp. (strain RQ2).